A 206-amino-acid chain; its full sequence is Adenylyl-sulfate kinase (206 aa).

31–38 (GLSASGKS) provides a ligand contact to ATP. Catalysis depends on Ser-105, which acts as the Phosphoserine intermediate.

The protein belongs to the APS kinase family.

It carries out the reaction adenosine 5'-phosphosulfate + ATP = 3'-phosphoadenylyl sulfate + ADP + H(+). The protein operates within sulfur metabolism; hydrogen sulfide biosynthesis; sulfite from sulfate: step 2/3. Its function is as follows. Catalyzes the synthesis of activated sulfate. The protein is Adenylyl-sulfate kinase (sD) of Emericella nidulans (strain FGSC A4 / ATCC 38163 / CBS 112.46 / NRRL 194 / M139) (Aspergillus nidulans).